Reading from the N-terminus, the 310-residue chain is Ribosomal RNA small subunit methyltransferase H (310 aa).

Residues 32–34, Asp52, Phe79, Asp100, and Gln107 contribute to the S-adenosyl-L-methionine site; that span reads GGH.

It belongs to the methyltransferase superfamily. RsmH family.

It is found in the cytoplasm. The enzyme catalyses cytidine(1402) in 16S rRNA + S-adenosyl-L-methionine = N(4)-methylcytidine(1402) in 16S rRNA + S-adenosyl-L-homocysteine + H(+). Its function is as follows. Specifically methylates the N4 position of cytidine in position 1402 (C1402) of 16S rRNA. The sequence is that of Ribosomal RNA small subunit methyltransferase H from Bacillus mycoides (strain KBAB4) (Bacillus weihenstephanensis).